A 104-amino-acid chain; its full sequence is MYAVVVTGGKQYKVTEGDVLFVEKLDAEVDAAIELDNVLAISKDNGEFVVGKPVVEGAKVTAKVLKQGKAKKVVVFKYKPKKHYRKKQGHRQPYTKIQIEKINA.

It belongs to the bacterial ribosomal protein bL21 family. As to quaternary structure, part of the 50S ribosomal subunit. Contacts protein L20.

Functionally, this protein binds to 23S rRNA in the presence of protein L20. The chain is Large ribosomal subunit protein bL21 from Clostridium tetani (strain Massachusetts / E88).